The following is a 72-amino-acid chain: Translational regulator CsrA (72 aa).

The protein belongs to the CsrA/RsmA family. Homodimer; the beta-strands of each monomer intercalate to form a hydrophobic core, while the alpha-helices form wings that extend away from the core.

The protein resides in the cytoplasm. Functionally, a translational regulator that binds mRNA to regulate translation initiation and/or mRNA stability. Usually binds in the 5'-UTR at or near the Shine-Dalgarno sequence preventing ribosome-binding, thus repressing translation. Its main target seems to be the major flagellin gene, while its function is anatagonized by FliW. The chain is Translational regulator CsrA from Clostridium novyi (strain NT).